We begin with the raw amino-acid sequence, 497 residues long: Cytochrome P450 monooxygenase 151 (497 aa).

A helical membrane pass occupies residues Met-1–Tyr-21. Asn-292 and Asn-397 each carry an N-linked (GlcNAc...) asparagine glycan. Cys-441 lines the heme pocket.

This sequence belongs to the cytochrome P450 family. Requires heme as cofactor.

Its subcellular location is the membrane. Its pathway is secondary metabolite biosynthesis. Its function is as follows. Cytochrome P450 monooxygenase that is able to use dehydroabietic acid and testosterone as substrates for oxidation, suggesting that the natural substrate(s) may be structurally related to steroid compounds. The polypeptide is Cytochrome P450 monooxygenase 151 (Postia placenta (strain ATCC 44394 / Madison 698-R) (Brown rot fungus)).